The sequence spans 219 residues: uncharacterized protein (219 aa).

Residues 4 to 79 (GLRIIAENKI…YIIEIEEEES (76 aa)) enclose the ACT domain.

This is an uncharacterized protein from Archaeoglobus fulgidus (strain ATCC 49558 / DSM 4304 / JCM 9628 / NBRC 100126 / VC-16).